The primary structure comprises 119 residues: Holo-[acyl-carrier-protein] synthase (119 aa).

Residues D8 and E58 each coordinate Mg(2+).

Belongs to the P-Pant transferase superfamily. AcpS family. Requires Mg(2+) as cofactor.

It is found in the cytoplasm. It catalyses the reaction apo-[ACP] + CoA = holo-[ACP] + adenosine 3',5'-bisphosphate + H(+). Transfers the 4'-phosphopantetheine moiety from coenzyme A to a Ser of acyl-carrier-protein. The sequence is that of Holo-[acyl-carrier-protein] synthase from Bacillus thuringiensis subsp. konkukian (strain 97-27).